We begin with the raw amino-acid sequence, 465 residues long: Ras GTPase-activating protein-binding protein 1 (465 aa).

In terms of domain architecture, NTF2 spans 11 to 133; that stretch reads VGREFVRQYY…FYVHNDIFRY (123 aa). Residues Lys36, Lys50, Lys59, Lys64, Lys76, and Lys123 each participate in a glycyl lysine isopeptide (Lys-Gly) (interchain with G-Cter in ubiquitin) cross-link. The segment at 142–224 is acidic disordered region; that stretch reads ITEPQEESEE…EPVLEETAPE (83 aa). A Phosphothreonine modification is found at Thr143. 2 stretches are compositionally biased toward acidic residues: residues 145–157 and 184–205; these read PQEESEEEVEEPE and EHLEEPVAEPEPEPEPEPEQEP. Residues 145–242 form a disordered region; it reads PQEESEEEVE…APADIAQTVQ (98 aa). Ser149 carries the post-translational modification Phosphoserine. A phosphoserine mark is found at Ser230, Ser231, Ser249, and Ser252. The tract at residues 254–326 is disordered; that stretch reads TSKNLPPSGA…PVREAGEQGD (73 aa). Composition is skewed to basic and acidic residues over residues 296–306 and 317–326; these read PQRDQRVREQR and PVREAGEQGD. Residues 339–414 enclose the RRM domain; that stretch reads HQLFIGNLPH…VRLNVEEKKT (76 aa). Glycyl lysine isopeptide (Lys-Gly) (interchain with G-Cter in ubiquitin) cross-links involve residues Lys352 and Lys356. Ser372 is subject to Phosphoserine. A Glycyl lysine isopeptide (Lys-Gly) (interchain with G-Cter in ubiquitin) cross-link involves residue Lys375. Lys375 bears the N6-acetyllysine; alternate mark. Residue Lys375 forms a Glycyl lysine isopeptide (Lys-Gly) (interchain with G-Cter in SUMO2); alternate linkage. Lys392 participates in a covalent cross-link: Glycyl lysine isopeptide (Lys-Gly) (interchain with G-Cter in ubiquitin); alternate. The interval 409-465 is RG-rich region; it reads VEEKKTRAAREGDRRDNRLRGPGGPRGGLGGGMRGPPRGGMVQKPGFGVGRSIAPRQ. Positions 412-427 are enriched in basic and acidic residues; it reads KKTRAAREGDRRDNRL. The interval 412–465 is disordered; that stretch reads KKTRAAREGDRRDNRLRGPGGPRGGLGGGMRGPPRGGMVQKPGFGVGRSIAPRQ. Residue Arg428 is modified to Asymmetric dimethylarginine. The span at 429 to 446 shows a compositional bias: gly residues; it reads GPGGPRGGLGGGMRGPPR. Asymmetric dimethylarginine; alternate is present on Arg434. Omega-N-methylarginine; alternate is present on residues Arg434, Arg446, Arg459, and Arg464. Arg459 is subject to Dimethylated arginine; alternate.

As to quaternary structure, homodimer and oligomer. Component of a TAU mRNP complex, at least composed of IGF2BP1, ELAVL4 and G3BP1. Binds to the SH3 domain of Ras GTPase-activating protein (RASA1) in proliferating cells. No interaction in quiescent cells. Interacts (via NTF2 domain) with USP10; inhibiting stress granule formation by lowering G3BP1 valence. Interacts (via NTF2 domain) with CAPRIN1; promoting stress granule formation by lowering the saturation-concentration of G3BP1. Interacts (via NTF2 domain) with UBAP2L; promoting stress granule formation. Associates (via RG-rich region) with 40S ribosome subunits. Interacts with RPTOR and SPAG5; this complex is increased by oxidative stress. Interacts with ATXN2L. Interacts with STYXL1. Interacts with CGAS (via N-terminus); this interaction promotes the DNA-binding and activation of CGAS. Interacts (via C-terminus) with RIGI. Interacts with PABPC1. Interacts with QKI (isoforms QKI6 and QKI7); directing N(7)-methylguanine-containing mRNAs to stress granules. It depends on Mg(2+) as a cofactor. Phosphorylation of the acidic disordered region regulates stress granule assembly. RASA1-dependent phosphorylation of Ser-149 induces a conformational change that prevents self-association. Dephosphorylation after HRAS activation is required for stress granule assembly. Ser-149 phosphorylation induces partial nuclear localization. Post-translationally, arg-435 is dimethylated, probably to asymmetric dimethylarginine. In terms of processing, ubiquitinated by TRIM21 via 'Lys-63'-linked polyubiquitination in the NTF2 domain in response to heat shock, leading to stress granule disassembly: ubiquitination promotes interaction with the FAF2 adapter, followed by interaction with VCP, which extracts G3BP1 from stress granules, leading to stress granule disassembly. In case of prolonged stress, ubiquitination by TRIM21 leads to autophagy-dependent degradation of G3BP1 via recruitment of ubiquitinated G3BP1 by SQSTM1 and/or CALCOCO2 to autophagosomes.

Its subcellular location is the cytoplasm. The protein resides in the cytosol. The protein localises to the perikaryon. It is found in the stress granule. It localises to the nucleus. It carries out the reaction ATP + H2O = ADP + phosphate + H(+). Its activity is regulated as follows. Under physiological conditions, G3BP1 adopts a compact state that is stabilized by intramolecular interactions between the RG-rich and the acidic regions that inhibit phase separation. Upon stress, polysomes disassemble and mRNAs are released in an unfolded protein-free state. Binding of unfolded mRNA to G3BP1 outcompetes the intramolecular interactions and RNA-bound G3BP1 adopts an expanded conformation in which the RG-rich region becomes exposed to engage in protein-protein and protein-RNA interactions, allowing physical cross-linking of RNA molecules to form protein-RNA condensates, leading to liquid-liquid phase separation (LLPS). Protein involved in various processes, such as stress granule formation and innate immunity. Plays an essential role in stress granule formation. Stress granules are membraneless compartments that store mRNAs and proteins, such as stalled translation pre-initiation complexes, in response to stress. Promotes formation of stress granules phase-separated membraneless compartment by undergoing liquid-liquid phase separation (LLPS) upon unfolded RNA-binding: functions as a molecular switch that triggers RNA-dependent LLPS in response to a rise in intracellular free RNA concentrations. Also acts as an ATP- and magnesium-dependent helicase: unwinds DNA/DNA, RNA/DNA, and RNA/RNA substrates with comparable efficiency. Acts unidirectionally by moving in the 5' to 3' direction along the bound single-stranded DNA. Unwinds preferentially partial DNA and RNA duplexes having a 17 bp annealed portion and either a hanging 3' tail or hanging tails at both 5'- and 3'-ends. Plays an essential role in innate immunity by promoting CGAS and RIGI activity. Participates in the DNA-triggered cGAS/STING pathway by promoting the DNA binding and activation of CGAS. Triggers the condensation of cGAS, a process probably linked to the formation of membrane-less organelles. Also enhances RIGI-induced type I interferon production probably by helping RIGI at sensing pathogenic RNA. May also act as a phosphorylation-dependent sequence-specific endoribonuclease in vitro: Cleaves exclusively between cytosine and adenine and cleaves MYC mRNA preferentially at the 3'-UTR. The sequence is that of Ras GTPase-activating protein-binding protein 1 (G3BP1) from Bos taurus (Bovine).